The sequence spans 828 residues: Outer membrane usher protein MrkC (828 aa).

The first 18 residues, 1-18, serve as a signal peptide directing secretion; that stretch reads MKQRSICPGRLSTAIAVA. Cysteine 813 and cysteine 827 form a disulfide bridge.

The protein belongs to the fimbrial export usher family.

The protein localises to the cell outer membrane. In terms of biological role, involved in the export and assembly of the type 3 fimbrial subunit (MrkA). The chain is Outer membrane usher protein MrkC (mrkC) from Klebsiella pneumoniae.